A 300-amino-acid polypeptide reads, in one-letter code: Bifunctional protein FolD 2 (300 aa).

NADP(+)-binding positions include 165-167 (GRS), serine 190, and isoleucine 231.

Belongs to the tetrahydrofolate dehydrogenase/cyclohydrolase family. Homodimer.

The catalysed reaction is (6R)-5,10-methylene-5,6,7,8-tetrahydrofolate + NADP(+) = (6R)-5,10-methenyltetrahydrofolate + NADPH. The enzyme catalyses (6R)-5,10-methenyltetrahydrofolate + H2O = (6R)-10-formyltetrahydrofolate + H(+). It functions in the pathway one-carbon metabolism; tetrahydrofolate interconversion. Its function is as follows. Catalyzes the oxidation of 5,10-methylenetetrahydrofolate to 5,10-methenyltetrahydrofolate and then the hydrolysis of 5,10-methenyltetrahydrofolate to 10-formyltetrahydrofolate. This chain is Bifunctional protein FolD 2, found in Pseudomonas syringae pv. tomato (strain ATCC BAA-871 / DC3000).